The primary structure comprises 511 residues: Maturase K (511 aa).

This sequence belongs to the intron maturase 2 family. MatK subfamily.

It localises to the plastid. It is found in the chloroplast. In terms of biological role, usually encoded in the trnK tRNA gene intron. Probably assists in splicing its own and other chloroplast group II introns. The protein is Maturase K of Triticum aestivum (Wheat).